We begin with the raw amino-acid sequence, 127 residues long: Large ribosomal subunit protein uL22 (127 aa).

The protein belongs to the universal ribosomal protein uL22 family. As to quaternary structure, part of the 50S ribosomal subunit.

Its function is as follows. This protein binds specifically to 23S rRNA; its binding is stimulated by other ribosomal proteins, e.g. L4, L17, and L20. It is important during the early stages of 50S assembly. It makes multiple contacts with different domains of the 23S rRNA in the assembled 50S subunit and ribosome. Functionally, the globular domain of the protein is located near the polypeptide exit tunnel on the outside of the subunit, while an extended beta-hairpin is found that lines the wall of the exit tunnel in the center of the 70S ribosome. This chain is Large ribosomal subunit protein uL22, found in Methylobacterium sp. (strain 4-46).